Reading from the N-terminus, the 384-residue chain is Outer membrane protein assembly factor BamB (384 aa).

Positions 1-21 (MKLTLKRKFIAVLALTSLLGA) are cleaved as a signal peptide. Cys-22 carries the N-palmitoyl cysteine lipid modification. Cys-22 carries S-diacylglycerol cysteine lipidation.

The protein belongs to the BamB family. Part of the Bam complex.

The protein localises to the cell outer membrane. In terms of biological role, part of the outer membrane protein assembly complex, which is involved in assembly and insertion of beta-barrel proteins into the outer membrane. The protein is Outer membrane protein assembly factor BamB of Taylorella asinigenitalis (strain MCE3).